Consider the following 520-residue polypeptide: Keratin, type II cytoskeletal 4 (520 aa).

A head region spans residues 1-136 (MIARQQCVRG…DPEIQKVRTE (136 aa)). At arginine 13 the chain carries Omega-N-methylarginine. The segment at 137-172 (EREQIKLLNNKFASFIDKVQFLEQQNKVLETKWNLL) is coil 1A. The IF rod domain maps to 137-450 (EREQIKLLNN…KLLEGEEYRM (314 aa)). The tract at residues 173 to 191 (QQQTTTTSSKNLEPLFETY) is linker 1. Residues 192–284 (LSVLRKQLDT…LYDAELSQMQ (93 aa)) form a coil 1B region. Positions 285–307 (THVSDTSVVLSMDNNRNLDLDSI) are linker 12. The segment at 308 to 447 (IAEVRAQYEE…TYRKLLEGEE (140 aa)) is coil 2. The tract at residues 448–520 (YRMSGECQSA…ISTTTLNKRR (73 aa)) is tail. The disordered stretch occupies residues 500-520 (GSVSGSSSSKIISTTTLNKRR). Positions 503 to 514 (SGSSSSKIISTT) are enriched in low complexity.

The protein belongs to the intermediate filament family. In terms of assembly, heterotetramer of two type I and two type II keratins. Keratin-4 is generally associated with keratin-13. In terms of tissue distribution, detected in the suprabasal layer of the stratified epithelium of the esophagus, exocervix, vagina, mouth and lingual mucosa, and in cells and cell clusters in the mucosa and serous gland ducts of the esophageal submucosa (at protein level). Expressed widely in the exocervix and esophageal epithelium, with lowest levels detected in the basal cell layer.

The protein is Keratin, type II cytoskeletal 4 (KRT4) of Homo sapiens (Human).